The chain runs to 551 residues: DEAD-box ATP-dependent RNA helicase 47, mitochondrial (551 aa).

A mitochondrion-targeting transit peptide spans 1–29; sequence MAASTSTRFLVLLKDFSAFRKISWTCAAT. The Q motif signature appears at 110–138; the sequence is KSFEELGLPDSLLDSLEREGFSVPTDVQS. A Helicase ATP-binding domain is found at 141–340; the sequence is VPAIIKGHDA…KSWSHEPVLV (200 aa). 154-161 contributes to the ATP binding site; it reads SYTGSGKT. Positions 274-277 match the DEAD box motif; the sequence is DEVD. A Helicase C-terminal domain is found at 397–548; sequence TLRRCVHALD…ELVVTEEDKA (152 aa).

Belongs to the DEAD box helicase family. As to expression, mostly expressed in leaves and flowers, and, to a lower extent, in roots, seedlings and siliques, especially in meristematic regions.

The protein localises to the mitochondrion. The enzyme catalyses ATP + H2O = ADP + phosphate + H(+). Essential protein required during embryogenesis. Required for mitochondrial metabolism. Necessary for normal plasmodesmata (PD) development and aperture regulation. The protein is DEAD-box ATP-dependent RNA helicase 47, mitochondrial (RH47) of Arabidopsis thaliana (Mouse-ear cress).